A 177-amino-acid chain; its full sequence is Co-chaperone protein HscB homolog (177 aa).

The region spanning 8–80 is the J domain; the sequence is DYFSLFGMPR…LSRAQYLLEL (73 aa).

This sequence belongs to the HscB family. As to quaternary structure, interacts with HscA and stimulates its ATPase activity.

Functionally, co-chaperone involved in the maturation of iron-sulfur cluster-containing proteins. Seems to help targeting proteins to be folded toward HscA. The sequence is that of Co-chaperone protein HscB homolog from Azoarcus sp. (strain BH72).